The primary structure comprises 873 residues: Coatomer subunit gamma-2 (873 aa).

The segment covering 1-11 has biased composition (basic and acidic residues); sequence MIKKFDKKDEE. The tract at residues 1–21 is disordered; the sequence is MIKKFDKKDEESGSGSNPFQN. HEAT repeat units follow at residues 64 to 101, 283 to 320, 321 to 355, 356 to 392, 394 to 430, and 467 to 504; these read TEAT…ISED, RELA…KHPS, AVTA…GSES, SVDR…KYPR, HSAM…ENPE, and PQPS…QNDD.

The protein belongs to the COPG family. As to quaternary structure, oligomeric complex.

It is found in the cytoplasm. It localises to the golgi apparatus membrane. The protein localises to the cytoplasmic vesicle. The protein resides in the COPI-coated vesicle membrane. The coatomer is a cytosolic protein complex that binds to dilysine motifs and reversibly associates with Golgi non-clathrin-coated vesicles, which further mediate biosynthetic protein transport from the ER, via the Golgi up to the trans Golgi network. Coatomer complex is required for budding from Golgi membranes, and is essential for the retrograde Golgi-to-ER transport of dilysine-tagged proteins. The polypeptide is Coatomer subunit gamma-2 (copg2) (Takifugu rubripes (Japanese pufferfish)).